The primary structure comprises 107 residues: SH3 domain-binding glutamic acid-rich-like protein 2 (107 aa).

The short motif at 61-67 is the SH3-binding element; it reads QGNPLPP.

Belongs to the SH3BGR family. In terms of tissue distribution, highly expressed in brain, placenta, liver and kidney. Expressed in retina.

The protein resides in the nucleus. This chain is SH3 domain-binding glutamic acid-rich-like protein 2 (SH3BGRL2), found in Homo sapiens (Human).